Consider the following 138-residue polypeptide: Small ribosomal subunit protein uS11c (138 aa).

The interval 1 to 24 is disordered; that stretch reads MIKPIPRISSRRNGRIGSRKTGRR. The segment covering 9 to 24 has biased composition (basic residues); that stretch reads SSRRNGRIGSRKTGRR.

It belongs to the universal ribosomal protein uS11 family. As to quaternary structure, part of the 30S ribosomal subunit.

The protein resides in the plastid. It is found in the chloroplast. In Lemna minor (Common duckweed), this protein is Small ribosomal subunit protein uS11c.